The primary structure comprises 31 residues: U14-ctenitoxin-Co1c (31 aa).

As to expression, expressed by the venom gland.

The protein resides in the secreted. Not toxic to mice by intracerebroventricular injection. The chain is U14-ctenitoxin-Co1c from Ctenus ornatus (Brazilian spider).